The primary structure comprises 87 residues: Small ribosomal subunit protein bS18 (87 aa).

It belongs to the bacterial ribosomal protein bS18 family. As to quaternary structure, part of the 30S ribosomal subunit. Forms a tight heterodimer with protein bS6.

Functionally, binds as a heterodimer with protein bS6 to the central domain of the 16S rRNA, where it helps stabilize the platform of the 30S subunit. This chain is Small ribosomal subunit protein bS18, found in Nitratidesulfovibrio vulgaris (strain ATCC 29579 / DSM 644 / CCUG 34227 / NCIMB 8303 / VKM B-1760 / Hildenborough) (Desulfovibrio vulgaris).